A 268-amino-acid chain; its full sequence is Phosphatidylglycerol--prolipoprotein diacylglyceryl transferase (268 aa).

Helical transmembrane passes span 10–30 (VALAIGPLKIHWYGLMYLIGI), 56–76 (LVFWLSMGVIVGGRLGYVLFY), 92–112 (WKGGMSFHGGFIGVMLAALWF), 120–140 (FFELMDFVAPLVPIGLGAGRI), 174–194 (PSQLYQFALEGVALFVILWLF), 202–222 (MAVSGMFSLCYGIFRFAVEFV), and 236–256 (WLTQGQLLCIPMIVGGLVLIW). Arg139 contacts a 1,2-diacyl-sn-glycero-3-phospho-(1'-sn-glycerol).

It belongs to the Lgt family.

Its subcellular location is the cell inner membrane. It carries out the reaction L-cysteinyl-[prolipoprotein] + a 1,2-diacyl-sn-glycero-3-phospho-(1'-sn-glycerol) = an S-1,2-diacyl-sn-glyceryl-L-cysteinyl-[prolipoprotein] + sn-glycerol 1-phosphate + H(+). It participates in protein modification; lipoprotein biosynthesis (diacylglyceryl transfer). Catalyzes the transfer of the diacylglyceryl group from phosphatidylglycerol to the sulfhydryl group of the N-terminal cysteine of a prolipoprotein, the first step in the formation of mature lipoproteins. This is Phosphatidylglycerol--prolipoprotein diacylglyceryl transferase from Pseudomonas putida (strain ATCC 47054 / DSM 6125 / CFBP 8728 / NCIMB 11950 / KT2440).